The following is a 159-amino-acid chain: MSSQPAADDVIGCLAAVYDWAESFDTKDWDRLRTVLAPTMRIDYTQVMGKIWESMPADDFIPLASDPKFLGNPLLKTQHFIGASKWEKTSDDEITGRHQVRVAHQRYADSGMKEVAKKGHAHGGATTWFKRVDGVWKFAGLCPDIRWSEYNYDEMFGEN.

Residues His-79 and His-104 contribute to the active site.

This sequence belongs to the scytalone dehydratase family. Homotrimer. Each subunit contains an active site, located in the central part of the hydrophobic core of the monomer, which functions independently.

It participates in secondary metabolite biosynthesis. Functionally, dehydratase; part of the gene cluster that mediates the biosynthesis of dibenzodioxocinones such as pestalotiollide B, a novel class of inhibitors against cholesterol ester transfer protein (CEPT). The biosynthesis initiates from condensation of acetate and malonate units catalyzed by the non-reducing PKS pks8/GME11356. Pks8/GME11356 lacks a thioesterase (TE) domain, which is important to the cyclizing of the third ring of atrochrysone carboxylic acid, and the esterase GME11355 might play the role of TE and catalyzes the cyclization reaction of the C ring. The lactamase-like protein GME11357 (or other beta-lactamases in Pestalotiopsis microspora) probably hydrolyzes the thioester bond between the ACP of pks8/GME11356 and the intermediate to release atrochrysone carboxylic acid, which is spontaneously dehydrates to form endocrocin anthrone. Endocrocin anthrone is further converted to emodin via the endocrocin intermediate. Emodin is then oxidized by several enzymes such as the Baeyer-Villiger oxidase GME11358, the oxidoreductase GME11367, the short chain dehydrogenase/reductase GME11373, as well as by other oxidoreductases from the cluster, to modify the A and C rings and open the B ring, and finally yield monodictyphenone. The prenyltransferase GME11375 may catalyze the addition reaction between the C5 side chains and the carbon bone of dibenzodioxocinones. The remaining biochemical reactions to the final product dibenzodioxocinones should be methylation catalyzed by methyltransferase GME11366 and reduction and lactonization reaction catalyzed by a series of oxidordeuctases. In Pestalotiopsis microspora, this protein is Dehydratase GME11372.